The primary structure comprises 309 residues: uncharacterized protein (309 aa).

Residues 11-87 (QRLDTFLATL…FPLDILYEDE (77 aa)) form the S4 RNA-binding domain. Asp-131 is a catalytic residue.

It belongs to the pseudouridine synthase RluA family.

It catalyses the reaction a uridine in RNA = a pseudouridine in RNA. This is an uncharacterized protein from Mycoplasma pneumoniae (strain ATCC 29342 / M129 / Subtype 1) (Mycoplasmoides pneumoniae).